The sequence spans 123 residues: MPTINQLIRIERKAVLKRKKTPALQACPQRRGVCTRVYTTTPKKPNSALRKVARVRLTNGIEVTAYIPGEGHNLQEHSVVIIRGGRVKDLPGVRYHIVRGTLDTSGVADRRKSRSKYGAKRPK.

3-methylthioaspartic acid is present on D89.

This sequence belongs to the universal ribosomal protein uS12 family. As to quaternary structure, part of the 30S ribosomal subunit. Contacts proteins S8 and S17. May interact with IF1 in the 30S initiation complex.

Functionally, with S4 and S5 plays an important role in translational accuracy. In terms of biological role, interacts with and stabilizes bases of the 16S rRNA that are involved in tRNA selection in the A site and with the mRNA backbone. Located at the interface of the 30S and 50S subunits, it traverses the body of the 30S subunit contacting proteins on the other side and probably holding the rRNA structure together. The combined cluster of proteins S8, S12 and S17 appears to hold together the shoulder and platform of the 30S subunit. This is Small ribosomal subunit protein uS12 from Desulfovibrio desulfuricans (strain ATCC 27774 / DSM 6949 / MB).